We begin with the raw amino-acid sequence, 24 residues long: Coenzyme PQQ synthesis protein A (24 aa).

The segment at residues E16 to Y20 is a cross-link (pyrroloquinoline quinone (Glu-Tyr)).

This sequence belongs to the PqqA family.

Its pathway is cofactor biosynthesis; pyrroloquinoline quinone biosynthesis. In terms of biological role, required for coenzyme pyrroloquinoline quinone (PQQ) biosynthesis. PQQ is probably formed by cross-linking a specific glutamate to a specific tyrosine residue and excising these residues from the peptide. This is Coenzyme PQQ synthesis protein A from Acinetobacter baumannii (strain SDF).